Here is an 85-residue protein sequence, read N- to C-terminus: 4-hydroxyphenylacetate decarboxylase small subunit (85 aa).

Residues His4, Cys7, Cys20, Cys34, Cys43, Cys46, Cys60, and Cys78 each coordinate [4Fe-4S] cluster.

It belongs to the HPA decarboxylase small subunit family. Heterooctamer consisting of 4 large (HpdB) subunits and 4 small (HpdC) subunits, arranged as a tetramer of heterodimers. [4Fe-4S] cluster is required as a cofactor.

The catalysed reaction is 4-hydroxyphenylacetate + H(+) = 4-methylphenol + CO2. The enzyme catalyses 3,4-dihydroxyphenylacetate + H(+) = 4-methylcatechol + CO2. In terms of biological role, component of the HPA decarboxylase that decarboxylates phenylacetates with a hydroxyl group in the p-position. Active toward 4-hydroxyphenylacetate and 3,4-dihydroxyphenylacetate, forming 4-methylphenol and 4-methylcatechol, respectively. Is likely involved in the catabolism of aromatic amino acids such as tyrosine fermentation. 4-methylphenol (p-cresol) formation provides metabolic toxicity, which allows an active suppression of other microbes and may provide growth advantages for the producers in highly competitive environments. The small subunit is essential for enzymatic activity of HPA decarboxylase, and also seems to be involved in the regulation of the enzyme oligomeric state and catalytic activity. The chain is 4-hydroxyphenylacetate decarboxylase small subunit from Clostridioides difficile (strain 630) (Peptoclostridium difficile).